A 331-amino-acid polypeptide reads, in one-letter code: Lactamase-like protein nscB (331 aa).

The Zn(2+) site is built by histidine 106, histidine 108, aspartate 110, and histidine 111. The active-site Proton donor/acceptor is the aspartate 110.

It belongs to the metallo-beta-lactamase superfamily. Requires Zn(2+) as cofactor.

It functions in the pathway secondary metabolite biosynthesis. In terms of biological role, lactamase-like protein; part of the gene cluster that mediates the biosynthesis of neosartoricin B, a prenylated anthracenone that probably exhibits T-cell antiproliferative activity, suggestive of a physiological role as an immunosuppressive agent. The non-reducing polyketide synthase nscA probably synthesizes and cyclizes the decaketide backbone. The hydrolase nscB then mediates the product release through hydrolysis followed by spontaneous decarboxylation. The prenyltransferase nscD catalyzes the addition of the dimethylallyl group to the aromatic C5. The FAD-dependent monooxygenase nscC is then responsible for the stereospecific hydroxylation at C2. Neosartoricin B can be converted into two additional compounds neosartoricins C and D. Neosartoricin C is a spirocyclic compound that is cyclized through the attack of C3 hydroxyl on C14, followed by dehydration. On the other hand, neosartoricin D is a further cyclized compound in which attack of C2 on C14 in neosartoricin C results in the formation of the acetal-containing dioxabicyclo-octanone ring. Both of these compounds are novel and possibly represent related metabolites of the gene cluster. In Trichophyton equinum (strain ATCC MYA-4606 / CBS 127.97) (Horse ringworm fungus), this protein is Lactamase-like protein nscB.